Consider the following 28-residue polypeptide: 14-3-3-like protein 4 (28 aa).

It belongs to the 14-3-3 family.

The protein is 14-3-3-like protein 4 of Pseudotsuga menziesii (Douglas-fir).